The chain runs to 91 residues: Small ribosomal subunit protein bS20 (91 aa).

Residues 1–23 (MANTPSAKKRAKQAEKRRSHNAS) form a disordered region. Over residues 7–20 (AKKRAKQAEKRRSH) the composition is skewed to basic residues.

The protein belongs to the bacterial ribosomal protein bS20 family.

Binds directly to 16S ribosomal RNA. The polypeptide is Small ribosomal subunit protein bS20 (Pseudomonas aeruginosa (strain LESB58)).